The sequence spans 378 residues: Anhydro-N-acetylmuramic acid kinase (378 aa).

An ATP-binding site is contributed by 9–16; that stretch reads GTSADGID.

The protein belongs to the anhydro-N-acetylmuramic acid kinase family.

The enzyme catalyses 1,6-anhydro-N-acetyl-beta-muramate + ATP + H2O = N-acetyl-D-muramate 6-phosphate + ADP + H(+). It participates in amino-sugar metabolism; 1,6-anhydro-N-acetylmuramate degradation. Its pathway is cell wall biogenesis; peptidoglycan recycling. In terms of biological role, catalyzes the specific phosphorylation of 1,6-anhydro-N-acetylmuramic acid (anhMurNAc) with the simultaneous cleavage of the 1,6-anhydro ring, generating MurNAc-6-P. Is required for the utilization of anhMurNAc either imported from the medium or derived from its own cell wall murein, and thus plays a role in cell wall recycling. The chain is Anhydro-N-acetylmuramic acid kinase from Synechococcus elongatus (strain ATCC 33912 / PCC 7942 / FACHB-805) (Anacystis nidulans R2).